Here is a 471-residue protein sequence, read N- to C-terminus: Phosphatidylserine synthase 2 (471 aa).

The tract at residues 1 to 26 (MRRGERRVAGGSGSESPLLEGRRSTE) is disordered. The Cytoplasmic segment spans residues 1 to 40 (MRRGERRVAGGSGSESPLLEGRRSTESEVYDDGTNTFFWR). Ser-12, Ser-14, and Ser-16 each carry phosphoserine. A helical transmembrane segment spans residues 41 to 61 (AHTLTVLFILTCALGYVTLLE). Residues 62 to 74 (ETPQDTAYNTKRG) lie on the Lumenal side of the membrane. Residues 75 to 95 (IVASILVFLCFGVTQAKDGPF) form a helical membrane-spanning segment. The Cytoplasmic portion of the chain corresponds to 96–104 (SRPHPAYWR). The chain crosses the membrane as a helical span at residues 105–125 (FWLCVSVVYELFLIFILFQTV). At 126 to 291 (HDGRQFLKYV…EWKPASSLHR (166 aa)) the chain is on the lumenal side. Residue Asn-159 is glycosylated (N-linked (GlcNAc...) asparagine). Residues 292 to 312 (WLAVCGIILVFLLAELNTFYL) traverse the membrane as a helical segment. Position 313 (Lys-313) is a topological domain, cytoplasmic. The helical transmembrane segment at 314–334 (FVLWMPPEHYLVLLRLVFFVN) threads the bilayer. The Lumenal segment spans residues 335 to 354 (VGGVAMREIYDFMDELKPHR). Residues 355 to 375 (KLGQQAWLVAAITVTELLIVV) traverse the membrane as a helical segment. Residues 376-381 (KYDPHT) lie on the Cytoplasmic side of the membrane. The chain crosses the membrane as a helical span at residues 382–402 (LTLSLPFYISQCWTLGSILVL). At 403–471 (TWTVWRFFLR…PAEEGPSAAS (69 aa)) the chain is on the lumenal side. Residues 423-471 (RQKQQSHQAINNGDGHPGPEDDLPGTGTAEEEGTTNDGVPAEEGPSAAS) form a disordered region.

This sequence belongs to the phosphatidyl serine synthase family.

It is found in the endoplasmic reticulum membrane. The catalysed reaction is a 1,2-diacyl-sn-glycero-3-phosphoethanolamine + L-serine = a 1,2-diacyl-sn-glycero-3-phospho-L-serine + ethanolamine. It catalyses the reaction 1-hexadecanoyl-2-(9Z-octadecenoyl)-sn-glycero-3-phosphoethanolamine + L-serine = 1-hexadecanoyl-2-(9Z-octadecenoyl)-sn-glycero-3-phospho-L-serine + ethanolamine. It carries out the reaction 1-hexadecanoyl-2-(4Z,7Z,10Z,13Z,16Z,19Z-docosahexaenoyl)-sn-glycero-3-phosphoethanolamine + L-serine = 1-hexadecanoyl-2-(4Z,7Z,10Z,13Z,16Z,19Z-docosahexaenoyl)-sn-glycero-3-phosphoserine + ethanolamine. The enzyme catalyses 1-octadecanoyl-2-(5Z,8Z,11Z,14Z)-eicosatetraenoyl-sn-glycero-3-phosphoethanolamine + L-serine = 1-octadecanoyl-2-(5Z,8Z,11Z,14Z)-eicosatetraenoyl-sn-glycero-3-phosphoserine + ethanolamine. The catalysed reaction is 1-octadecanoyl-2-(4Z,7Z,10Z,13Z,16Z,19Z-docosahexaenoyl)-sn-glycero-3-phosphoethanolamine + L-serine = 1-octadecanoyl-2-(4Z,7Z,10Z,13Z,16Z,19Z-docosahexaenoyl)-sn-glycero-3-phosphoserine + ethanolamine. It catalyses the reaction 1-(1Z-octadecenyl)-2-(4Z,7Z,10Z,13Z,16Z,19Z-docosahexaenoyl)-sn-glycero-3-phosphoethanolamine + L-serine = 1-(1Z-octadecenyl)-2-(4Z,7Z,10Z,13Z,16Z,19Z-docosahexaenoyl)-sn-glycero-3-phospho-L-serine + ethanolamine. It carries out the reaction 1-octadecanoyl-2-(9Z-octadecenoyl)-sn-glycero-3-phosphoethanolamine + L-serine = 1-octadecanoyl-2-(9Z-octadecenoyl)-sn-glycero-3-phospho-L-serine + ethanolamine. The enzyme catalyses 1-(1Z-octadecenyl)-2-(9Z-octadecenoyl)-sn-glycero-3-phosphoethanolamine + L-serine = 1-(1Z-octadecenyl)-2-(9Z-octadecenoyl)-sn-glycero-3-phospho-L-serine + ethanolamine. The catalysed reaction is 1-(1Z-octadecenyl)-2-(5Z,8Z,11Z,14Z- eicosatetraenoyl)-sn-glycero-3-phosphoethanolamine + L-serine = 1-(1Z-octadecenyl)-2-(5Z,8Z,11Z,14Z-eicosatetraenoyl)-sn-glycero-3-phospho-L-serine + ethanolamine. The protein operates within phospholipid metabolism; phosphatidylserine biosynthesis. Its function is as follows. Catalyzes a base-exchange reaction in which the polar head group of phosphatidylethanolamine (PE) or phosphatidylcholine (PC) is replaced by L-serine. Catalyzes the conversion of phosphatatidylethanolamine and does not act on phosphatidylcholine. Can utilize both phosphatidylethanolamine (PE) plasmalogen and diacyl PE as substrate and the latter is six times better utilized, indicating the importance of an ester linkage at the sn-1 position. Although it shows no sn-1 fatty acyl preference, exhibits significant preference towards docosahexaenoic acid (22:6n-3) compared with 18:1 or 20:4 at the sn-2 position. This is Phosphatidylserine synthase 2 (Ptdss2) from Rattus norvegicus (Rat).